Here is a 329-residue protein sequence, read N- to C-terminus: MSSAQRVVITPGEPAGIGPDLVVQLAQRAWPIELVVCADGPLLTERAAMLGLPLSLLPYSPDVPAAPQPAGTLTLLPVSLRAPAIPGQLTVENGPYVVETLARACDGCLQHEFAALITGPVHKGVINDAGIPFTGHTEFFEERSQAKKVVMMLATEALRVALATTHLPLRAIADAITPALLHDVIAILHHDLRTKFGLRNPHILVCGLNPHAGEGGHMGTEEIDTIIPVLDELRAQGMHLTGPLPADTLFQPKYLDHADAVLAMYHDQGLPVLKYQGFGRGVNITLGLPFIRTSVDHGTALELAGQGKADVGSFITALNLAIKMIVNTQ.

2 residues coordinate substrate: His-136 and Thr-137. A divalent metal cation contacts are provided by His-166, His-211, and His-266. Lys-274, Asn-283, and Arg-292 together coordinate substrate.

The protein belongs to the PdxA family. In terms of assembly, homodimer. Requires Zn(2+) as cofactor. The cofactor is Mg(2+). Co(2+) serves as cofactor.

It is found in the cytoplasm. The enzyme catalyses 4-(phosphooxy)-L-threonine + NAD(+) = 3-amino-2-oxopropyl phosphate + CO2 + NADH. It functions in the pathway cofactor biosynthesis; pyridoxine 5'-phosphate biosynthesis; pyridoxine 5'-phosphate from D-erythrose 4-phosphate: step 4/5. Functionally, catalyzes the NAD(P)-dependent oxidation of 4-(phosphooxy)-L-threonine (HTP) into 2-amino-3-oxo-4-(phosphooxy)butyric acid which spontaneously decarboxylates to form 3-amino-2-oxopropyl phosphate (AHAP). This chain is 4-hydroxythreonine-4-phosphate dehydrogenase, found in Salmonella arizonae (strain ATCC BAA-731 / CDC346-86 / RSK2980).